The chain runs to 352 residues: Tubby-like F-box protein 10 (352 aa).

A compositionally biased stretch (basic and acidic residues) spans 1 to 11 (MAAVREPREEA). The segment at 1–23 (MAAVREPREEAAVGEGEGEEEGR) is disordered. The 57-residue stretch at 22-78 (GRWGGLLPELVEEVVRRVEASGGERWPARKDLVSCACVCRRWREAAAAVVRPLPESG) folds into the F-box domain.

It belongs to the TUB family. In terms of tissue distribution, ubiquitous.

In Oryza sativa subsp. japonica (Rice), this protein is Tubby-like F-box protein 10 (TULP10).